We begin with the raw amino-acid sequence, 562 residues long: Catalase T (562 aa).

Catalysis depends on residues His64 and Asn137. Tyr351 provides a ligand contact to heme.

Belongs to the catalase family. As to quaternary structure, homotetramer. Heme is required as a cofactor.

It is found in the cytoplasm. It catalyses the reaction 2 H2O2 = O2 + 2 H2O. Its function is as follows. Occurs in almost all aerobically respiring organisms and serves to protect cells from the toxic effects of hydrogen peroxide. This Saccharomyces cerevisiae (strain ATCC 204508 / S288c) (Baker's yeast) protein is Catalase T (CTT1).